A 145-amino-acid chain; its full sequence is D-aminoacyl-tRNA deacylase (145 aa).

The short motif at 137 to 138 (GP) is the Gly-cisPro motif, important for rejection of L-amino acids element.

Belongs to the DTD family. As to quaternary structure, homodimer.

The protein localises to the cytoplasm. The catalysed reaction is glycyl-tRNA(Ala) + H2O = tRNA(Ala) + glycine + H(+). It catalyses the reaction a D-aminoacyl-tRNA + H2O = a tRNA + a D-alpha-amino acid + H(+). An aminoacyl-tRNA editing enzyme that deacylates mischarged D-aminoacyl-tRNAs. Also deacylates mischarged glycyl-tRNA(Ala), protecting cells against glycine mischarging by AlaRS. Acts via tRNA-based rather than protein-based catalysis; rejects L-amino acids rather than detecting D-amino acids in the active site. By recycling D-aminoacyl-tRNA to D-amino acids and free tRNA molecules, this enzyme counteracts the toxicity associated with the formation of D-aminoacyl-tRNA entities in vivo and helps enforce protein L-homochirality. This Legionella pneumophila (strain Lens) protein is D-aminoacyl-tRNA deacylase.